A 263-amino-acid polypeptide reads, in one-letter code: 4-hydroxy-2-oxo-heptane-1,7-dioate aldolase (263 aa).

The Proton acceptor role is filled by histidine 45. Glutamine 147 is a substrate binding site. Position 149 (glutamate 149) interacts with a divalent metal cation. Substrate contacts are provided by alanine 174 and aspartate 175. A divalent metal cation is bound at residue aspartate 175.

This sequence belongs to the HpcH/HpaI aldolase family. Homohexamer; trimer of dimers. The cofactor is a divalent metal cation.

The enzyme catalyses 4-hydroxy-2-oxoheptanedioate = succinate semialdehyde + pyruvate. Its pathway is aromatic compound metabolism; 4-hydroxyphenylacetate degradation; pyruvate and succinate semialdehyde from 4-hydroxyphenylacetate: step 7/7. Functionally, catalyzes the reversible retro-aldol cleavage of 4-hydroxy-2-ketoheptane-1,7-dioate (HKHD) to pyruvate and succinic semialdehyde. In Salmonella paratyphi A (strain ATCC 9150 / SARB42), this protein is 4-hydroxy-2-oxo-heptane-1,7-dioate aldolase.